A 261-amino-acid chain; its full sequence is 1-(5-phosphoribosyl)-5-[(5-phosphoribosylamino)methylideneamino] imidazole-4-carboxamide isomerase (261 aa).

Asp-15 functions as the Proton acceptor in the catalytic mechanism. Asp-136 functions as the Proton donor in the catalytic mechanism.

The protein belongs to the HisA/HisF family.

It is found in the cytoplasm. It carries out the reaction 1-(5-phospho-beta-D-ribosyl)-5-[(5-phospho-beta-D-ribosylamino)methylideneamino]imidazole-4-carboxamide = 5-[(5-phospho-1-deoxy-D-ribulos-1-ylimino)methylamino]-1-(5-phospho-beta-D-ribosyl)imidazole-4-carboxamide. Its pathway is amino-acid biosynthesis; L-histidine biosynthesis; L-histidine from 5-phospho-alpha-D-ribose 1-diphosphate: step 4/9. The sequence is that of 1-(5-phosphoribosyl)-5-[(5-phosphoribosylamino)methylideneamino] imidazole-4-carboxamide isomerase from Synechococcus sp. (strain JA-3-3Ab) (Cyanobacteria bacterium Yellowstone A-Prime).